A 544-amino-acid chain; its full sequence is Methionine--tRNA ligase (544 aa).

The short motif at 10–20 (PYANGSLHLGH) is the 'HIGH' region element. Residues C141, C144, C153, and C156 each coordinate Zn(2+). The 'KMSKS' region motif lies at 329–333 (KLSTS). T332 lines the ATP pocket.

This sequence belongs to the class-I aminoacyl-tRNA synthetase family. MetG type 1 subfamily. Monomer. The cofactor is Zn(2+).

It localises to the cytoplasm. The catalysed reaction is tRNA(Met) + L-methionine + ATP = L-methionyl-tRNA(Met) + AMP + diphosphate. Is required not only for elongation of protein synthesis but also for the initiation of all mRNA translation through initiator tRNA(fMet) aminoacylation. This chain is Methionine--tRNA ligase, found in Bacillus cereus (strain B4264).